A 138-amino-acid polypeptide reads, in one-letter code: Protein Rrf1 (138 aa).

Residues 4–116 form the Response regulatory domain; the sequence is RILVVQEDPD…LLLALVDRAL (113 aa). 2 positions are modified to 4-aspartylphosphate: Asp-13 and Asp-53.

Functionally, may be involved in regulation of gene transcription. Belongs to the family of response regulators, and members of this family involved in the regulation of gene transcription are two-domain proteins. This protein contains only the N-terminal phosphorylation domain and not the C-terminal DNA-binding domain but it may bind to Rrf2 protein and the latter may bind to DNA. The protein is Protein Rrf1 (rrf1) of Nitratidesulfovibrio vulgaris (strain ATCC 29579 / DSM 644 / CCUG 34227 / NCIMB 8303 / VKM B-1760 / Hildenborough) (Desulfovibrio vulgaris).